We begin with the raw amino-acid sequence, 659 residues long: Exoribonuclease 2 (659 aa).

The RNB domain maps to R189–A531. The 83-residue stretch at N576–L658 folds into the S1 motif domain.

This sequence belongs to the RNR ribonuclease family. RNase II subfamily.

It is found in the cytoplasm. The enzyme catalyses Exonucleolytic cleavage in the 3'- to 5'-direction to yield nucleoside 5'-phosphates.. Its function is as follows. Involved in mRNA degradation. Hydrolyzes single-stranded polyribonucleotides processively in the 3' to 5' direction. This is Exoribonuclease 2 from Haemophilus influenzae (strain 86-028NP).